A 398-amino-acid polypeptide reads, in one-letter code: tRNA(Ile)-lysidine synthase (398 aa).

25-30 (SGGVDS) is a binding site for ATP.

It belongs to the tRNA(Ile)-lysidine synthase family.

It is found in the cytoplasm. It catalyses the reaction cytidine(34) in tRNA(Ile2) + L-lysine + ATP = lysidine(34) in tRNA(Ile2) + AMP + diphosphate + H(+). In terms of biological role, ligates lysine onto the cytidine present at position 34 of the AUA codon-specific tRNA(Ile) that contains the anticodon CAU, in an ATP-dependent manner. Cytidine is converted to lysidine, thus changing the amino acid specificity of the tRNA from methionine to isoleucine. In Francisella tularensis subsp. novicida (strain U112), this protein is tRNA(Ile)-lysidine synthase.